Consider the following 161-residue polypeptide: MQDAITSVINAADVQGKYLDDSSVEKLRGYFQTGELRVRAAATIAANAATIIKESVAKSLLYSDITRPGGNMYTTRRYAACIRDLDYYLRYATYGMLAGDPSILEERVLNGLKETYNSLGVPIGATIQAILAMKEVTISLVGPDAGKEMGLYFDYICSGLS.

Position 71 is an N4-methylasparagine (N71). C81 serves as a coordination point for (2R,3E)-phycocyanobilin.

It belongs to the phycobiliprotein family. In terms of assembly, heterodimer of an alpha and a beta chain. In terms of processing, contains one covalently linked phycocyanobilin chromophore.

The protein localises to the plastid. It localises to the chloroplast thylakoid membrane. Functionally, light-harvesting photosynthetic bile pigment-protein from the phycobiliprotein complex. Allophycocyanin has a maximum absorption at approximately 650 nanometers. The protein is Allophycocyanin beta chain (apcB) of Porphyra purpurea (Red seaweed).